The sequence spans 309 residues: Taste receptor type 2 member 31 (309 aa).

Over 1–2 (MI) the chain is Extracellular. A helical transmembrane segment spans residues 3 to 23 (TFLPIIFSILVVVTFVIGNFA). Over 24 to 55 (NGFIALVNSTEWVKRQKISFADQILTALAVSR) the chain is Cytoplasmic. The helical transmembrane segment at 56-76 (VGLLWVLLLNWYATVLNPAFY) threads the bilayer. Residues 77–100 (SVEVRTTTYNVWAVTNHFSNWLAT) are Extracellular-facing. The chain crosses the membrane as a helical span at residues 101–121 (SLSIFYLLKIANFSNLIFLHL). Topologically, residues 122 to 126 (KRRVK) are cytoplasmic. A helical membrane pass occupies residues 127-147 (NVILVMLLGPLLILACHLFMV). At 148-181 (NMNEIVRTKEYEENMTWKYILRNAIYHPGMTVTT) the chain is on the extracellular side. Asn161 is a glycosylation site (N-linked (GlcNAc...) asparagine). Residues 182 to 202 (LQNLVPFTLTLISFLLLICSL) traverse the membrane as a helical segment. At 203-229 (CKHLKKMQLHGKGPQDPSTKVHIKALQ) the chain is on the cytoplasmic side. Residues 230–250 (IVISFLLLCVIYFVSVIISIW) traverse the membrane as a helical segment. Residues 251 to 259 (SFESLGNKP) are Extracellular-facing. The helical transmembrane segment at 260-280 (VFMFCQAIRFSYPSAHPFIVI) threads the bilayer. Over 281–309 (WGNKKLKQTFLSVLWNVRYWVKGQKPSSL) the chain is Cytoplasmic.

It belongs to the G-protein coupled receptor T2R family.

The protein localises to the membrane. Functionally, receptor that may play a role in the perception of bitterness and is gustducin-linked. May play a role in sensing the chemical composition of the gastrointestinal content. The activity of this receptor may stimulate alpha gustducin, mediate PLC-beta-2 activation and lead to the gating of TRPM5. In Papio hamadryas (Hamadryas baboon), this protein is Taste receptor type 2 member 31 (TAS2R31).